The sequence spans 252 residues: Imidazole glycerol phosphate synthase subunit HisF (252 aa).

Catalysis depends on residues aspartate 11 and aspartate 130.

The protein belongs to the HisA/HisF family. As to quaternary structure, heterodimer of HisH and HisF.

It is found in the cytoplasm. The catalysed reaction is 5-[(5-phospho-1-deoxy-D-ribulos-1-ylimino)methylamino]-1-(5-phospho-beta-D-ribosyl)imidazole-4-carboxamide + L-glutamine = D-erythro-1-(imidazol-4-yl)glycerol 3-phosphate + 5-amino-1-(5-phospho-beta-D-ribosyl)imidazole-4-carboxamide + L-glutamate + H(+). It functions in the pathway amino-acid biosynthesis; L-histidine biosynthesis; L-histidine from 5-phospho-alpha-D-ribose 1-diphosphate: step 5/9. Its function is as follows. IGPS catalyzes the conversion of PRFAR and glutamine to IGP, AICAR and glutamate. The HisF subunit catalyzes the cyclization activity that produces IGP and AICAR from PRFAR using the ammonia provided by the HisH subunit. This is Imidazole glycerol phosphate synthase subunit HisF from Staphylococcus aureus (strain USA300).